The sequence spans 729 residues: Polyribonucleotide nucleotidyltransferase (729 aa).

Mg(2+) contacts are provided by Asp-485 and Asp-491. Residues 552-611 enclose the KH domain; it reads PRITTMKVAEDKIRTIIGKGGATIKGLIESTGVSIDIDDSGVIQLFSPDKMALEEAQKQI. The S1 motif domain maps to 621–689; it reads GQTYQGKVSK…KQGRVKLEWK (69 aa). The tract at residues 710-729 is disordered; it reads TMEEQSEEINSGNKISEEEE.

It belongs to the polyribonucleotide nucleotidyltransferase family. In terms of assembly, component of the RNA degradosome, which is a multiprotein complex involved in RNA processing and mRNA degradation. Requires Mg(2+) as cofactor.

It is found in the cytoplasm. It carries out the reaction RNA(n+1) + phosphate = RNA(n) + a ribonucleoside 5'-diphosphate. Its function is as follows. Involved in mRNA degradation. Catalyzes the phosphorolysis of single-stranded polyribonucleotides processively in the 3'- to 5'-direction. The chain is Polyribonucleotide nucleotidyltransferase from Legionella pneumophila (strain Paris).